The chain runs to 137 residues: Putative pre-16S rRNA nuclease (137 aa).

Belongs to the YqgF nuclease family.

It localises to the cytoplasm. Could be a nuclease involved in processing of the 5'-end of pre-16S rRNA. In Anaeromyxobacter sp. (strain Fw109-5), this protein is Putative pre-16S rRNA nuclease.